The following is a 303-amino-acid chain: UDP-3-O-acyl-N-acetylglucosamine deacetylase (303 aa).

Zn(2+) is bound by residues histidine 78, histidine 237, and aspartate 241. The Proton donor role is filled by histidine 264.

This sequence belongs to the LpxC family. Zn(2+) is required as a cofactor.

The catalysed reaction is a UDP-3-O-[(3R)-3-hydroxyacyl]-N-acetyl-alpha-D-glucosamine + H2O = a UDP-3-O-[(3R)-3-hydroxyacyl]-alpha-D-glucosamine + acetate. The protein operates within glycolipid biosynthesis; lipid IV(A) biosynthesis; lipid IV(A) from (3R)-3-hydroxytetradecanoyl-[acyl-carrier-protein] and UDP-N-acetyl-alpha-D-glucosamine: step 2/6. In terms of biological role, catalyzes the hydrolysis of UDP-3-O-myristoyl-N-acetylglucosamine to form UDP-3-O-myristoylglucosamine and acetate, the committed step in lipid A biosynthesis. The chain is UDP-3-O-acyl-N-acetylglucosamine deacetylase from Xanthomonas axonopodis pv. citri (strain 306).